The following is a 93-amino-acid chain: DNA-directed RNA polymerase subunit omega (93 aa).

This sequence belongs to the RNA polymerase subunit omega family. The RNAP catalytic core consists of 2 alpha, 1 beta, 1 beta' and 1 omega subunit. When a sigma factor is associated with the core the holoenzyme is formed, which can initiate transcription.

The catalysed reaction is RNA(n) + a ribonucleoside 5'-triphosphate = RNA(n+1) + diphosphate. Functionally, promotes RNA polymerase assembly. Latches the N- and C-terminal regions of the beta' subunit thereby facilitating its interaction with the beta and alpha subunits. This chain is DNA-directed RNA polymerase subunit omega, found in Actinobacillus pleuropneumoniae serotype 3 (strain JL03).